Reading from the N-terminus, the 532-residue chain is Light-independent protochlorophyllide reductase subunit B (532 aa).

Position 36 (aspartate 36) interacts with [4Fe-4S] cluster. Aspartate 292 serves as the catalytic Proton donor. Substrate is bound at residue 428 to 429; the sequence is GL. A disordered region spans residues 445 to 486; it reads EEEEPESISNGHAAAAGSEGGVPDSGEAGDAGDTDGMPWSPD.

Belongs to the ChlB/BchB/BchZ family. In terms of assembly, protochlorophyllide reductase is composed of three subunits; BchL, BchN and BchB. Forms a heterotetramer of two BchB and two BchN subunits. It depends on [4Fe-4S] cluster as a cofactor.

It catalyses the reaction chlorophyllide a + oxidized 2[4Fe-4S]-[ferredoxin] + 2 ADP + 2 phosphate = protochlorophyllide a + reduced 2[4Fe-4S]-[ferredoxin] + 2 ATP + 2 H2O. It functions in the pathway porphyrin-containing compound metabolism; bacteriochlorophyll biosynthesis (light-independent). Its function is as follows. Component of the dark-operative protochlorophyllide reductase (DPOR) that uses Mg-ATP and reduced ferredoxin to reduce ring D of protochlorophyllide (Pchlide) to form chlorophyllide a (Chlide). This reaction is light-independent. The NB-protein (BchN-BchB) is the catalytic component of the complex. The polypeptide is Light-independent protochlorophyllide reductase subunit B (Chlorobium phaeobacteroides (strain BS1)).